A 122-amino-acid chain; its full sequence is UPF0382 membrane protein SE_0353 (122 aa).

Transmembrane regions (helical) follow at residues 3 to 23 (VFII…AFGA), 46 to 66 (MYHG…SINV), 69 to 89 (AGWL…FLAL), and 98 to 118 (ITPI…IATL).

This sequence belongs to the UPF0382 family.

It localises to the cell membrane. The polypeptide is UPF0382 membrane protein SE_0353 (Staphylococcus epidermidis (strain ATCC 12228 / FDA PCI 1200)).